The sequence spans 2628 residues: Protein FMP27, mitochondrial (2628 aa).

A signal peptide spans 1–28 (MMFPINVLLYKWLIFAVTFLWSCKILLR). The interval 29-192 (KLLGINITWI…NTNLLIGEIM (164 aa)) is transmembrane domain. LRR repeat units follow at residues 160 to 182 (FDSF…IFIV), 213 to 236 (PMNL…KLLQ), 271 to 296 (IKPL…NHPE), 306 to 333 (YNVL…IFEE), 571 to 596 (NADI…LVHN), 835 to 857 (VVSL…IFGH), 1944 to 1967 (FDSL…FFIF), 2101 to 2125 (FFML…IFLK), and 2303 to 2327 (IGKL…ILRK).

It localises to the cell membrane. The protein localises to the endoplasmic reticulum membrane. Its subcellular location is the mitochondrion membrane. In terms of biological role, tube-forming lipid transport protein which binds to phosphatidylinositols and affects phosphatidylinositol-4,5-bisphosphate (PtdIns-4,5-P2) distribution. The polypeptide is Protein FMP27, mitochondrial (Saccharomyces cerevisiae (strain ATCC 204508 / S288c) (Baker's yeast)).